Here is a 270-residue protein sequence, read N- to C-terminus: 4-hydroxy-tetrahydrodipicolinate reductase (270 aa).

NAD(+) is bound by residues 9–14 and E35; that span reads GAGGRM. Position 36 (R36) interacts with NADP(+). NAD(+)-binding positions include 99–101 and 123–126; these read GTT and ASNY. H156 (proton donor/acceptor) is an active-site residue. Residue H157 coordinates (S)-2,3,4,5-tetrahydrodipicolinate. The active-site Proton donor is K160. 166–167 is a (S)-2,3,4,5-tetrahydrodipicolinate binding site; the sequence is GT.

The protein belongs to the DapB family.

It localises to the cytoplasm. It carries out the reaction (S)-2,3,4,5-tetrahydrodipicolinate + NAD(+) + H2O = (2S,4S)-4-hydroxy-2,3,4,5-tetrahydrodipicolinate + NADH + H(+). It catalyses the reaction (S)-2,3,4,5-tetrahydrodipicolinate + NADP(+) + H2O = (2S,4S)-4-hydroxy-2,3,4,5-tetrahydrodipicolinate + NADPH + H(+). Its pathway is amino-acid biosynthesis; L-lysine biosynthesis via DAP pathway; (S)-tetrahydrodipicolinate from L-aspartate: step 4/4. Catalyzes the conversion of 4-hydroxy-tetrahydrodipicolinate (HTPA) to tetrahydrodipicolinate. The chain is 4-hydroxy-tetrahydrodipicolinate reductase from Mannheimia succiniciproducens (strain KCTC 0769BP / MBEL55E).